Reading from the N-terminus, the 646-residue chain is Heat shock 70 kDa protein (646 aa).

Residues 613–632 (GGAPGGMPGAAPGGFPGGAP) show a composition bias toward gly residues. A disordered region spans residues 613–646 (GGAPGGMPGAAPGGFPGGAPGSNDNEGPTVEEVD).

Belongs to the heat shock protein 70 family.

The chain is Heat shock 70 kDa protein (hsps-1) from Neurospora crassa (strain ATCC 24698 / 74-OR23-1A / CBS 708.71 / DSM 1257 / FGSC 987).